A 345-amino-acid chain; its full sequence is Phosphoribosylformylglycinamidine cyclo-ligase (345 aa).

The protein belongs to the AIR synthase family.

It localises to the cytoplasm. It catalyses the reaction 2-formamido-N(1)-(5-O-phospho-beta-D-ribosyl)acetamidine + ATP = 5-amino-1-(5-phospho-beta-D-ribosyl)imidazole + ADP + phosphate + H(+). It functions in the pathway purine metabolism; IMP biosynthesis via de novo pathway; 5-amino-1-(5-phospho-D-ribosyl)imidazole from N(2)-formyl-N(1)-(5-phospho-D-ribosyl)glycinamide: step 2/2. This is Phosphoribosylformylglycinamidine cyclo-ligase from Shewanella amazonensis (strain ATCC BAA-1098 / SB2B).